Consider the following 321-residue polypeptide: Cytochrome c biogenesis protein CcsA (321 aa).

Transmembrane regions (helical) follow at residues 17–37 (VVSI…FVGL), 48–68 (TFFC…HLPI), 71–91 (LYES…VPYF), 98–118 (LSTI…WGLL), 143–163 (MVSG…LLVI), 225–245 (ILSI…VWAN), 259–273 (TWAF…IYFH), and 286–306 (AIVA…VNLL).

It belongs to the CcmF/CycK/Ccl1/NrfE/CcsA family. In terms of assembly, may interact with Ccs1.

The protein resides in the plastid. It is found in the chloroplast thylakoid membrane. Functionally, required during biogenesis of c-type cytochromes (cytochrome c6 and cytochrome f) at the step of heme attachment. This is Cytochrome c biogenesis protein CcsA from Populus alba (White poplar).